Consider the following 81-residue polypeptide: CLAVATA3/ESR (CLE)-related protein 12 (81 aa).

A signal peptide spans 1-31; sequence MENSNKVPISKIGLIMLMIFSTFFMSPHARR. Basic and acidic residues predominate over residues 55 to 67; it reads KRSRTDLEDKAVP. The disordered stretch occupies residues 55–81; that stretch reads KRSRTDLEDKAVPGDRLSPGGPNHIHN. 2 positions are modified to hydroxyproline: Pro-73 and Pro-76. Pro-76 carries O-linked (Ara...) hydroxyproline glycosylation.

The protein belongs to the CLV3/ESR signal peptide family. In terms of processing, the O-glycosylation (arabinosylation) of the hydroxyproline Pro-76 enhances binding affinity of the CLE12p peptide for its receptor. In terms of tissue distribution, expressed in young nodules throughout the central tissue. Expressed in the apical region of elongated nodules, corresponding to the meristematic and early infection zones.

It localises to the secreted. It is found in the extracellular space. Signaling peptide involved in the regulation of nodulation. Moves from root to shoot to function with the receptor kinase SUNN, in a signaling pathway that plays roles during cellular differentiation, both at the onset of nodulation, and later during nodule meristem development and subsequent homeostasis. Interacts with SUNN signaling to control nodule numbers. SUNN is involved in the autoregulation of nodulation (AON), a long distance systemic signaling from root to shoot and back again, which allows legumes to limit the number of root nodules formed based on available nitrogen and previous rhizobial colonization. The protein is CLAVATA3/ESR (CLE)-related protein 12 of Medicago truncatula (Barrel medic).